A 314-amino-acid polypeptide reads, in one-letter code: Ribosomal RNA small subunit methyltransferase H (314 aa).

S-adenosyl-L-methionine contacts are provided by residues glycine 34–histidine 36, aspartate 53, phenylalanine 82, aspartate 103, and glutamine 110.

Belongs to the methyltransferase superfamily. RsmH family.

The protein localises to the cytoplasm. The enzyme catalyses cytidine(1402) in 16S rRNA + S-adenosyl-L-methionine = N(4)-methylcytidine(1402) in 16S rRNA + S-adenosyl-L-homocysteine + H(+). In terms of biological role, specifically methylates the N4 position of cytidine in position 1402 (C1402) of 16S rRNA. In Levilactobacillus brevis (strain ATCC 367 / BCRC 12310 / CIP 105137 / JCM 1170 / LMG 11437 / NCIMB 947 / NCTC 947) (Lactobacillus brevis), this protein is Ribosomal RNA small subunit methyltransferase H.